We begin with the raw amino-acid sequence, 3999 residues long: Hybrid PKS-NRPS synthetase xenE (3999 aa).

The Ketosynthase family 3 (KS3) domain occupies 13 to 449; it reads REPIAVVGSG…GTNAHCIIEN (437 aa). Residues C186, H325, and H369 each act as for beta-ketoacyl synthase activity in the active site. The Malonyl-CoA:ACP transacylase (MAT) domain occupies 562–879; it reads VFTGQGAQWP…TGLLNRGKDD (318 aa). An N-terminal hotdog fold region spans residues 949–1084; sequence NPLLGSRTTD…GRVIVITGET (136 aa). In terms of domain architecture, PKS/mFAS DH spans 949–1253; the sequence is NPLLGSRTTD…VVAFAEQTED (305 aa). Positions 950–1252 are dehydratase (DH) domain; that stretch reads PLLGSRTTDV…RVVAFAEQTE (303 aa). H981 acts as the Proton acceptor; for dehydratase activity in catalysis. Positions 1099–1253 are C-terminal hotdog fold; sequence LVDIPEDRFY…VVAFAEQTED (155 aa). D1159 acts as the Proton donor; for dehydratase activity in catalysis. Residues 1298-1593 are methyltransferase (cMeT) domain; it reads YMKQLVTLFP…FSGADSPMPE (296 aa). In terms of domain architecture, Ketoreductase (KR) spans 2133–2306; that stretch reads TYVLFGLTSD…AASILHLGAV (174 aa). The Carrier 1 domain occupies 2414 to 2495; it reads EEILEIVQDA…QLVEYAIGSM (82 aa). Position 2455 is an O-(pantetheine 4'-phosphoryl)serine (S2455). The tract at residues 2501 to 2573 is disordered; it reads PNRADSAKAS…EESPSESVND (73 aa). Over residues 2526–2554 the composition is skewed to low complexity; sequence SVSSSPSSLPKTSASGSSQQMSEGSSKTS. The condensation stretch occupies residues 2580-3015; that stretch reads EKVLPVSPGQ…EEVSLFTEQE (436 aa). The tract at residues 3045–3453 is adenylation; sequence AVHTDKVALK…RIEGDTQIKL (409 aa). In terms of domain architecture, Carrier 2 spans 3562–3642; sequence RKLTDTESKL…AMAAAIQDTS (81 aa). S3602 carries the post-translational modification O-(pantetheine 4'-phosphoryl)serine. The tract at residues 3681 to 3900 is reductase-like (R) domain (R); that stretch reads LTGATGFLGK…IDLITVEKAA (220 aa).

It in the C-terminal section; belongs to the NRP synthetase family.

The protein operates within mycotoxin biosynthesis. In terms of biological role, hybrid PKS-NRPS synthetase; part of the gene cluster that mediates the biosynthesis of xenoacremones such as xenoacremone A, a compound that shows inhibitory activity toward the PI3K/AKT signaling pathway and which has the ability to induce apoptosis of A549 lung cancer cells. Within the pathway, cooperation of the hybrid PKS-NRPS xenE and the trans-acting enoyl reductase xenG is responsible for the formation of the reduced tyrosine-nonaketide derivative. The PKS module of xenE acted in combination with the trans-acting enoyl reductase xenG to produce a double-methylated nonaketide attached to the ACP domain. In parallel, the adenylation (A) domain of the NRPS module activated L-tyrosine, which was then transferred to the ACP domain. The condensation (C) domain subsequently linked this group to the polyketide chain, forming an enzyme-bound amide. Reductive release by the C-terminal R domain afforded the aldehyde derivative. The alpha/beta hydrolase xenA then accelerates intramolecular nucleophilic attack to give a pyrrolidone derivative. Subsequently, three enzymes, xenF, xenD, and xenC, coordinately participate in the conversion to xenoacremone B. XenF catalyzes sigmatropic rearrangement to form an A-ring, which leads to an unusual intermediate with a hexane ring, which is required for the formation of the tricarbocyclic product. Epoxidation catalyzed by xenD and the formation of the paracyclophane ether catalyzed by xenC initiate a spontaneous intramolecular Diels-Alder (IMDA) reaction to yield xenoacremone B. Spontaneous hydration of xenoacremone B leads to the formation of xenoacremone A, which undergoes subsequent methylation to afford xenoacremone C. The polypeptide is Hybrid PKS-NRPS synthetase xenE (Xenoacremonium sinensis (Endophyte fungus)).